The primary structure comprises 386 residues: Protein salvador homolog 1 (386 aa).

Residues Ser95 and Ser137 each carry the phosphoserine modification. WW domains follow at residues 200–233 and 235–268; these read LPLP…HPLE and EGLP…HPCA. Thr211 bears the Phosphothreonine mark. An SARAH domain is found at 322-369; sequence ILKWELFQLADLDTYQGMLKLLFMKELEQIVKLYEAYRQALLTELENR. Residues 345 to 374 adopt a coiled-coil conformation; that stretch reads MKELEQIVKLYEAYRQALLTELENRKQRQQ.

In terms of assembly, homodimer. Stabilized through interaction with STK3/MST2 or STK4/MST1. Interacts (via SARAH domain) with isoform 1 of NEK2. Interacts with ESR1 only in the presence of STK3/MST2. Interacts with WTIP and AJUBA. Phosphorylated by STK3/MST2 and STK4/MST1. Phosphorylation is not required for SAV1 stability and may increase the number of protein binding sites on the scaffold molecule. In terms of tissue distribution, ubiquitously expressed in adult tissues with the highest level found in testis.

The protein localises to the nucleus. It is found in the cytoplasm. Functionally, regulator of STK3/MST2 and STK4/MST1 in the Hippo signaling pathway which plays a pivotal role in organ size control and tumor suppression by restricting proliferation and promoting apoptosis. The core of this pathway is composed of a kinase cascade wherein STK3/MST2 and STK4/MST1, in complex with its regulatory protein SAV1, phosphorylates and activates LATS1/2 in complex with its regulatory protein MOB1, which in turn phosphorylates and inactivates YAP1 oncoprotein and WWTR1/TAZ. Phosphorylation of YAP1 by LATS1/2 inhibits its translocation into the nucleus to regulate cellular genes important for cell proliferation, cell death, and cell migration. SAV1 is required for STK3/MST2 and STK4/MST1 activation and promotes cell-cycle exit and terminal differentiation in developing epithelial tissues. Plays a role in centrosome disjunction by regulating the localization of NEK2 to centrosomes, and its ability to phosphorylate CROCC and CEP250. In conjunction with STK3/MST2, activates the transcriptional activity of ESR1 through the modulation of its phosphorylation. The sequence is that of Protein salvador homolog 1 (Sav1) from Mus musculus (Mouse).